The following is a 639-amino-acid chain: MQFHLNGFRPGNPLIAPASPLAPAHTEAVPSQVDVLIVGCGPAGLTLAAQLAAFPDIRTCIVEQKEGPMELGQADGIACRTMEMFEAFEFADSILKEACWINDVTFWKPDPAQPGRIARHGRVQDTEDGLSEFPHVILNQARVHDHYLERMRNSPSRLEPHYARRVLDVKIDHGAADYPVTVTLERCDAAHAGQIETVQARYVVGCDGARSNVRRAIGRQLVGDSANQAWGVMDVLAVTDFPDVRYKVAIQSEQGNVLIIPREGGHLVRFYVEMDKLDADERVASRNITVEQLIATAQRVLHPYKLDVKNVPWWSVYEIGQRICAKYDDVADAVATPDSPLPRVFIAGDACHTHSPKAGQGMNFSMQDSFNLGWKLAAVLRKQCAPELLHTYSSERQVVAQQLIDFDREWAKMFSDPAKEGGQGGVDPKEFQKYFEQHGRFTAGVGTHYAPSLLTGQASHQALASGFTVGMRFHSAPVVRVSDAKPLQLGHCGKADGRWRLYAFAGQNDLAQPESGLLALCRFLESDAASPLRRFTPSGQDIDSIFDLRAIFPQAYTEVALETLPALLLPPKGQLGMIDYEKVFSPDLKNAGQDIFELRGIDRQQGALVVVRPDQYVAQVLPLGDHAALSAYFESFMRA.

Residues 34-64 (DVLI…IVEQ), glutamine 73, valine 166, asparagine 212, 269-271 (RFY), tyrosine 317, aspartate 349, and serine 365 contribute to the FAD site.

This sequence belongs to the PheA/TfdB FAD monooxygenase family. In terms of assembly, homodimer. The cofactor is FAD.

It catalyses the reaction 3-hydroxybenzoate + NADPH + O2 + H(+) = 3,4-dihydroxybenzoate + NADP(+) + H2O. Converts 3-hydroxybenzoate (m-hydroxybenzoate), and to a lesser extent p-hydroxybenzoate, to 3,4-dihydroxybenzoate (protocatechuate). Also acts on a number of analogs of 3-hydroxybenzoate substituted in the 2, 4, 5 and 6 positions. The polypeptide is 3-hydroxybenzoate 4-monooxygenase (mobA) (Comamonas testosteroni (Pseudomonas testosteroni)).